A 128-amino-acid polypeptide reads, in one-letter code: Cystatin-1 (128 aa).

The signal sequence occupies residues 1–17 (MIRSAVVLTVLVGVCLA). The 109-residue stretch at 20-128 (GFVGGWSQVD…TKEVTSFECN (109 aa)) folds into the Cystatin domain. Disulfide bonds link C84-C96 and C107-C127.

It belongs to the cystatin family. In terms of tissue distribution, mainly expressed in gut.

It localises to the secreted. Inhibitor of cysteine proteinases. Strongly inhibits mammalian cathepsin B and H, and moderately inhibits mammalian cathepsin C. Also inhibits endogenous cathepsin B-like but not cathepsin C-like proteinases. May have a protective role against undesired digestion of a stored blood meal by endogenous peptidases. The chain is Cystatin-1 from Ornithodoros moubata (Soft tick).